The sequence spans 228 residues: 5'-methylthioadenosine/S-adenosylhomocysteine nucleosidase (228 aa).

The Proton acceptor role is filled by E11. Substrate-binding positions include G77, I151, and 172-173 (ME). The active-site Proton donor is D196.

Belongs to the PNP/UDP phosphorylase family. MtnN subfamily.

It carries out the reaction S-adenosyl-L-homocysteine + H2O = S-(5-deoxy-D-ribos-5-yl)-L-homocysteine + adenine. The catalysed reaction is S-methyl-5'-thioadenosine + H2O = 5-(methylsulfanyl)-D-ribose + adenine. It catalyses the reaction 5'-deoxyadenosine + H2O = 5-deoxy-D-ribose + adenine. It participates in amino-acid biosynthesis; L-methionine biosynthesis via salvage pathway; S-methyl-5-thio-alpha-D-ribose 1-phosphate from S-methyl-5'-thioadenosine (hydrolase route): step 1/2. Functionally, catalyzes the irreversible cleavage of the glycosidic bond in both 5'-methylthioadenosine (MTA) and S-adenosylhomocysteine (SAH/AdoHcy) to adenine and the corresponding thioribose, 5'-methylthioribose and S-ribosylhomocysteine, respectively. Also cleaves 5'-deoxyadenosine, a toxic by-product of radical S-adenosylmethionine (SAM) enzymes, into 5-deoxyribose and adenine. In Staphylococcus haemolyticus (strain JCSC1435), this protein is 5'-methylthioadenosine/S-adenosylhomocysteine nucleosidase.